The primary structure comprises 407 residues: Nicotinate phosphoribosyltransferase (407 aa).

Histidine 224 bears the Phosphohistidine; by autocatalysis mark.

It belongs to the NAPRTase family. Post-translationally, transiently phosphorylated on a His residue during the reaction cycle. Phosphorylation strongly increases the affinity for substrates and increases the rate of nicotinate D-ribonucleotide production. Dephosphorylation regenerates the low-affinity form of the enzyme, leading to product release.

It catalyses the reaction nicotinate + 5-phospho-alpha-D-ribose 1-diphosphate + ATP + H2O = nicotinate beta-D-ribonucleotide + ADP + phosphate + diphosphate. Its pathway is cofactor biosynthesis; NAD(+) biosynthesis; nicotinate D-ribonucleotide from nicotinate: step 1/1. Catalyzes the synthesis of beta-nicotinate D-ribonucleotide from nicotinate and 5-phospho-D-ribose 1-phosphate at the expense of ATP. The chain is Nicotinate phosphoribosyltransferase from Pseudomonas savastanoi pv. phaseolicola (strain 1448A / Race 6) (Pseudomonas syringae pv. phaseolicola (strain 1448A / Race 6)).